The sequence spans 430 residues: Serine--tRNA ligase (430 aa).

Residues 41-60 form a disordered region; sequence QSRTQDLQNERNVRSKSIGK. 236-238 contacts L-serine; it reads TAE. 267–269 contacts ATP; it reads RSE. An L-serine-binding site is contributed by E290. 354-357 is a binding site for ATP; the sequence is EISS. S390 provides a ligand contact to L-serine.

Belongs to the class-II aminoacyl-tRNA synthetase family. Type-1 seryl-tRNA synthetase subfamily. Homodimer. The tRNA molecule binds across the dimer.

The protein localises to the cytoplasm. It catalyses the reaction tRNA(Ser) + L-serine + ATP = L-seryl-tRNA(Ser) + AMP + diphosphate + H(+). It carries out the reaction tRNA(Sec) + L-serine + ATP = L-seryl-tRNA(Sec) + AMP + diphosphate + H(+). It functions in the pathway aminoacyl-tRNA biosynthesis; selenocysteinyl-tRNA(Sec) biosynthesis; L-seryl-tRNA(Sec) from L-serine and tRNA(Sec): step 1/1. Functionally, catalyzes the attachment of serine to tRNA(Ser). Is also able to aminoacylate tRNA(Sec) with serine, to form the misacylated tRNA L-seryl-tRNA(Sec), which will be further converted into selenocysteinyl-tRNA(Sec). This Alteromonas mediterranea (strain DSM 17117 / CIP 110805 / LMG 28347 / Deep ecotype) protein is Serine--tRNA ligase.